The sequence spans 308 residues: Lysophosphatidic acid receptor 6 (308 aa).

Residues methionine 1–leucine 16 are Extracellular-facing. Residue asparagine 5 is glycosylated (N-linked (GlcNAc...) asparagine). A helical transmembrane segment spans residues tyrosine 17–leucine 43. Residues lysine 44–tyrosine 52 lie on the Cytoplasmic side of the membrane. Residues methionine 53 to valine 76 form a helical membrane-spanning segment. The Extracellular portion of the chain corresponds to arginine 77–serine 89. Cysteine 86 and cysteine 165 are joined by a disulfide. A helical membrane pass occupies residues valine 90–valine 109. The Cytoplasmic portion of the chain corresponds to aspartate 110–alanine 130. The chain crosses the membrane as a helical span at residues arginine 131–phenylalanine 151. Residues glutamine 152–leucine 178 are Extracellular-facing. The chain crosses the membrane as a helical span at residues serine 179 to arginine 206. The Cytoplasmic segment spans residues threonine 207 to valine 224. The chain crosses the membrane as a helical span at residues leucine 225–serine 250. At leucine 251–methionine 269 the chain is on the extracellular side. A helical membrane pass occupies residues tyrosine 270–tyrosine 289. Cysteine 281 is lipidated: S-palmitoyl cysteine. Topologically, residues phenylalanine 290–threonine 308 are cytoplasmic.

It belongs to the G-protein coupled receptor 1 family. In terms of tissue distribution, induced in activated T-cells.

The protein localises to the cell membrane. Binds to oleoyl-L-alpha-lysophosphatidic acid (LPA). Intracellular cAMP is involved in the receptor activation. This chain is Lysophosphatidic acid receptor 6 (LPAR6), found in Gallus gallus (Chicken).